Reading from the N-terminus, the 716-residue chain is Protein Hook homolog 2 (716 aa).

The segment at 1-161 (MSVDKAELCG…ELMTKDTPDS (161 aa)) is required for localization to the centrosome and induction of aggresome formation. The sufficient for interaction with microtubules stretch occupies residues 1–546 (MSVDKAELCG…LKRKLEDHLQ (546 aa)). Positions 6 to 122 (AELCGSLLTW…KLLQLVLGCA (117 aa)) constitute a Calponin-homology (CH) domain. Phosphoserine is present on serine 163. 2 coiled-coil regions span residues 188–427 (DHLQ…AQLQ) and 455–605 (AELR…VDKA). The required for localization to the centrosome and induction of aggresome formation stretch occupies residues 533–716 (DPTLLKRKLE…ALSLRPTDKH (184 aa)). The tract at residues 582–716 (DSLQKKDADL…ALSLRPTDKH (135 aa)) is sufficient for interaction with CNTRL.

It belongs to the hook family. As to quaternary structure, self-associates. Component of the FTS/Hook/FHIP complex (FHF complex), composed of AKTIP/FTS, FHIP1B, and one or more members of the Hook family of proteins HOOK1, HOOK2, and HOOK3. May interact directly with AKTIP/FTS, HOOK1 and HOOK3. Associates with several subunits of the homotypic vesicular sorting complex (the HOPS complex) including VPS16 and VPS41; these interactions may be indirect. Interacts with CNTRL. Interacts with microtubules. Interacts with ZC3H14. Interacts with LRGUK (via guanylate kinase-like domain). Interacts with CCDC181. Interacts with AP4M1; the interaction is direct, mediates the interaction between FTS-Hook-FHIP (FHF) complex and AP-4 and the perinuclear distribution of AP-4. As to expression, expressed in brain, cerebellum, kidney, liver and heart, with highest levels in heart and kidney (at protein level).

The protein localises to the cytoplasm. Its subcellular location is the cytoskeleton. It localises to the microtubule organizing center. The protein resides in the centrosome. It is found in the golgi apparatus. The protein localises to the trans-Golgi network. Component of the FTS/Hook/FHIP complex (FHF complex). The FHF complex may function to promote vesicle trafficking and/or fusion via the homotypic vesicular protein sorting complex (the HOPS complex). Contributes to the establishment and maintenance of centrosome function. May function in the positioning or formation of aggresomes, which are pericentriolar accumulations of misfolded proteins, proteasomes and chaperones. FHF complex promotes the distribution of AP-4 complex to the perinuclear area of the cell. The sequence is that of Protein Hook homolog 2 (Hook2) from Mus musculus (Mouse).